Reading from the N-terminus, the 130-residue chain is MTRTSVLADALNAINNAEKTGKRQVLIRPSSKVIIKFLQVMQKHGYIGEFEYIDDHRSGKIVVQLTGRLNKCGVISPRFNVKINDVEKWTANLLPARQFGYVILTTSAGIMDHEEAHRKHVAGKILGFVY.

This sequence belongs to the universal ribosomal protein uS8 family.

In Eremothecium gossypii (strain ATCC 10895 / CBS 109.51 / FGSC 9923 / NRRL Y-1056) (Yeast), this protein is Small ribosomal subunit protein uS8 (RPS22A).